Here is a 258-residue protein sequence, read N- to C-terminus: RBPJ-interacting and tubulin-associated protein 1 (258 aa).

3 disordered regions span residues 28 to 86, 132 to 182, and 195 to 258; these read FGSP…PRKK, TPPA…APRS, and AVPS…PPWK. Positions 71-81 are enriched in polar residues; sequence SPSSRGSTPNL. The Nuclear localization signal signature appears at 81–97; that stretch reads LTPRKKNKYRLIGHTPS. The interval 117–145 is interaction with RBPJ/RBPSUH; that stretch reads RTAVEDAAKLRTLFWTPPATPRGSHSPRP. The tract at residues 145-258 is interaction with tubulin; it reads PRETPLRAIH…CPQKPKPPWK (114 aa). Polar residues-rich tracts occupy residues 201–212 and 236–245; these read HPASTAPQTNGP and GSVSGPTTPQ.

It belongs to the RITA family. As to quaternary structure, interacts with RBPJ/RBPSUH.

It localises to the cytoplasm. The protein resides in the nucleus. It is found in the cytoskeleton. Its subcellular location is the microtubule organizing center. The protein localises to the centrosome. Tubulin-binding protein that acts as a negative regulator of Notch signaling pathway. Shuttles between the cytoplasm and the nucleus and mediates the nuclear export of RBPJ/RBPSUH, thereby preventing the interaction between RBPJ/RBPSUH and NICD product of Notch proteins (Notch intracellular domain), leading to down-regulate Notch-mediated transcription. May play a role in neurogenesis. This Rattus norvegicus (Rat) protein is RBPJ-interacting and tubulin-associated protein 1 (Rita1).